The following is a 331-amino-acid chain: 6-phosphogluconolactonase (331 aa).

Lys287 carries the N6-acetyllysine modification.

This sequence belongs to the cycloisomerase 2 family.

The enzyme catalyses 6-phospho-D-glucono-1,5-lactone + H2O = 6-phospho-D-gluconate + H(+). The protein operates within carbohydrate degradation; pentose phosphate pathway; D-ribulose 5-phosphate from D-glucose 6-phosphate (oxidative stage): step 2/3. In terms of biological role, catalyzes the hydrolysis of 6-phosphogluconolactone to 6-phosphogluconate. This Escherichia coli O7:K1 (strain IAI39 / ExPEC) protein is 6-phosphogluconolactonase.